Here is a 419-residue protein sequence, read N- to C-terminus: Synaptotagmin-2 (419 aa).

Topologically, residues 1–62 (MRNIFKRNQE…NEINKIPLPP (62 aa)) are vesicular. The tract at residues 16–39 (ATTTATMPIGPVDNSTESGGAGES) is disordered. The N-linked (GlcNAc...) asparagine glycan is linked to asparagine 29. A helical membrane pass occupies residues 63–83 (WALIAIAVVAGLLLLTCCFCI). Topologically, residues 84 to 419 (CKKCCCKKKK…EVDALLGKNK (336 aa)) are cytoplasmic. Residues 99-138 (GKGMKNAMNMKDMKGGQDDDDAETGLTEGEGEGEEEKEPE) form a disordered region. Residues 116–136 (DDDDAETGLTEGEGEGEEEKE) are compositionally biased toward acidic residues. Phosphothreonine is present on residues threonine 122 and threonine 125. The interval 133 to 379 (EEKEPENLGK…AIGKIFVGSN (247 aa)) is phospholipid binding. C2 domains lie at 139–258 (NLGK…EEWR) and 270–403 (KLGD…AQWH). Ca(2+)-binding residues include leucine 169, aspartate 170, and aspartate 176. Phosphothreonine is present on threonine 199. The residue at position 227 (tyrosine 227) is a Phosphotyrosine. Residues aspartate 228, phenylalanine 229, aspartate 230, serine 233, lysine 234, aspartate 236, aspartate 301, aspartate 307, aspartate 361, and aspartate 363 each contribute to the Ca(2+) site. Threonine 383 carries the phosphothreonine modification.

Belongs to the synaptotagmin family. Homotetramer. Heterodimer; heterodimerizes with SYT1 in presence of calcium. Interacts with STON2. Interacts with SCAMP5. Interacts with PRRT2. Ca(2+) is required as a cofactor. In terms of processing, phosphorylation at Thr-199 by WNK1, changes the calcium requirement for SYT2-binding to phospholipid membranes. Expressed at the neuromuscular junction. Expressed in melanocytes.

It localises to the cytoplasmic vesicle. The protein localises to the secretory vesicle. The protein resides in the synaptic vesicle membrane. Its subcellular location is the chromaffin granule membrane. It is found in the cytoplasm. Its function is as follows. Exhibits calcium-dependent phospholipid and inositol polyphosphate binding properties. May have a regulatory role in the membrane interactions during trafficking of synaptic vesicles at the active zone of the synapse. Plays a role in dendrite formation by melanocytes. The polypeptide is Synaptotagmin-2 (Homo sapiens (Human)).